Reading from the N-terminus, the 204-residue chain is Protein C (204 aa).

Positions 1–78 (MPSFLRGILK…TEQSQRRPKI (78 aa)) are disordered. A compositionally biased stretch (basic and acidic residues) spans 10-20 (KPKERHHENKN). Over residues 25 to 34 (SSDSLTSSYP) the composition is skewed to low complexity.

Belongs to the respirovirus protein C family.

The sequence is that of Protein C (P/V/C) from Homo sapiens (Human).